Here is a 1651-residue protein sequence, read N- to C-terminus: Roundabout homolog 1 (1651 aa).

An N-terminal signal peptide occupies residues 1-25; sequence MKWKHLPLLVMISLLTLSKKHLLLA. The Extracellular portion of the chain corresponds to 26-897; that stretch reads QLIPDPEDLE…QQISDVVKQP (872 aa). The disordered stretch occupies residues 31–66; it reads PEDLERGNDNGTPAPTSDNDDNSLGYTGSRLRQEDF. The span at 39 to 56 shows a compositional bias: polar residues; that stretch reads DNGTPAPTSDNDDNSLGY. Ig-like C2-type domains lie at 68–164, 170–257, 262–346, 351–446, and 455–541; these read PRIV…ASLE, DDFR…ADVT, PSFV…ATLT, PHFV…LEVT, and PVIR…AYIE. Cysteine 89 and cysteine 147 are oxidised to a cystine. Asparagine 160 carries N-linked (GlcNAc...) asparagine glycosylation. 3 disulfides stabilise this stretch: cysteine 191–cysteine 240, cysteine 283–cysteine 330, and cysteine 372–cysteine 428. The N-linked (GlcNAc...) asparagine glycan is linked to asparagine 463. Cysteine 476 and cysteine 525 are disulfide-bonded. Fibronectin type-III domains are found at residues 563-657, 676-773, and 778-874; these read APSK…TQDV, VVLH…TLEE, and PPRS…LDSH. N-linked (GlcNAc...) asparagine glycosylation is found at asparagine 790, asparagine 820, and asparagine 827. The chain crosses the membrane as a helical span at residues 898-918; that stretch reads AFIAGIGAACWIILMVFSIWL. Topologically, residues 919 to 1651 are cytoplasmic; that stretch reads YRHRKKRNGL…NNEELEETES (733 aa). The residue at position 940 (serine 940) is a Phosphoserine. The residue at position 948 (threonine 948) is a Phosphothreonine. The residue at position 1038 (tyrosine 1038) is a Phosphotyrosine. Residue serine 1055 is modified to Phosphoserine. Tyrosine 1073 carries the post-translational modification Phosphotyrosine. The disordered stretch occupies residues 1086-1107; it reads NMNNGGGDSSEKHWKPPGQQKQ. Residue tyrosine 1114 is modified to Phosphotyrosine. 3 disordered regions span residues 1137-1337, 1352-1397, and 1420-1651; these read PYNH…ADME, EQTP…DGSF, and RRQM…ETES. A compositionally biased stretch (low complexity) spans 1147–1163; sequence GGSYNSSDRGSSTSGSQ. Residues 1186–1196 show a composition bias toward pro residues; sequence LPPPPAHPPPH. Threonine 1240 carries the phosphothreonine modification. Polar residues predominate over residues 1255–1269; the sequence is YSHQSTATLTPSPQE. The segment covering 1281 to 1293 has biased composition (basic and acidic residues); it reads DLGHMPHPPDRRR. Over residues 1296–1307 the composition is skewed to pro residues; the sequence is VSPPPPPRPISP. At serine 1297 the chain carries Phosphoserine. Residues 1322 to 1336 are compositionally biased toward acidic residues; that stretch reads MDTDAPEEEEDEADM. Positions 1384–1397 are enriched in low complexity; that stretch reads SSGRSSVSSSDGSF. Residues 1438–1451 are compositionally biased toward polar residues; the sequence is PRPTSPVSTDSNMS. The span at 1459–1470 shows a compositional bias: basic residues; that stretch reads RPTKKQKHQPGH. Over residues 1480 to 1490 the composition is skewed to pro residues; the sequence is LPPPPVPPPAI. Basic and acidic residues-rich tracts occupy residues 1516–1541 and 1549–1573; these read ARAD…RQVT and DPRE…RDLP. Residues 1592-1601 show a composition bias toward polar residues; sequence FPTSNNPRDP. The segment covering 1602–1614 has biased composition (low complexity); it reads SSSSSMSSRGSGS. Acidic residues predominate over residues 1642 to 1651; sequence NNEELEETES.

Belongs to the immunoglobulin superfamily. ROBO family. In terms of assembly, homodimer. Dimerization is mediated by the extracellular domain and is independent of SLIT liganding. Interacts with SLIT1. Interacts with SLIT2. Interacts with FLRT3. Interacts with MYO9B (via Rho-GAP domain). Post-translationally, ubiquitinated. May be deubiquitinated by USP33. Expressed in embryonal brain and spinal cord.

It is found in the cell membrane. Its subcellular location is the cell projection. It localises to the axon. The protein localises to the endoplasmic reticulum-Golgi intermediate compartment membrane. Its function is as follows. Receptor for SLIT1 and SLIT2 that mediates cellular responses to molecular guidance cues in cellular migration, including axonal navigation at the ventral midline of the neural tube and projection of axons to different regions during neuronal development. Interaction with the intracellular domain of FLRT3 mediates axon attraction towards cells expressing NTN1. In axon growth cones, the silencing of the attractive effect of NTN1 by SLIT2 may require the formation of a ROBO1-DCC complex. Plays a role in the regulation of cell migration via its interaction with MYO9B; inhibits MYO9B-mediated stimulation of RHOA GTPase activity, and thereby leads to increased levels of active, GTP-bound RHOA. May be required for lung development. The chain is Roundabout homolog 1 (Robo1) from Rattus norvegicus (Rat).